The following is a 350-amino-acid chain: Mannonate dehydratase (350 aa).

Belongs to the mannonate dehydratase family. Fe(2+) serves as cofactor. The cofactor is Mn(2+).

The enzyme catalyses D-mannonate = 2-dehydro-3-deoxy-D-gluconate + H2O. It participates in carbohydrate metabolism; pentose and glucuronate interconversion. Functionally, catalyzes the dehydration of D-mannonate. The chain is Mannonate dehydratase from Clostridium perfringens (strain 13 / Type A).